A 285-amino-acid polypeptide reads, in one-letter code: Phosphatidylserine decarboxylase proenzyme (285 aa).

Catalysis depends on charge relay system; for autoendoproteolytic cleavage activity residues Asp89, His146, and Ser252. Ser252 (schiff-base intermediate with substrate; via pyruvic acid; for decarboxylase activity) is an active-site residue. Ser252 bears the Pyruvic acid (Ser); by autocatalysis mark.

Belongs to the phosphatidylserine decarboxylase family. PSD-B subfamily. Prokaryotic type I sub-subfamily. In terms of assembly, heterodimer of a large membrane-associated beta subunit and a small pyruvoyl-containing alpha subunit. Requires pyruvate as cofactor. In terms of processing, is synthesized initially as an inactive proenzyme. Formation of the active enzyme involves a self-maturation process in which the active site pyruvoyl group is generated from an internal serine residue via an autocatalytic post-translational modification. Two non-identical subunits are generated from the proenzyme in this reaction, and the pyruvate is formed at the N-terminus of the alpha chain, which is derived from the carboxyl end of the proenzyme. The autoendoproteolytic cleavage occurs by a canonical serine protease mechanism, in which the side chain hydroxyl group of the serine supplies its oxygen atom to form the C-terminus of the beta chain, while the remainder of the serine residue undergoes an oxidative deamination to produce ammonia and the pyruvoyl prosthetic group on the alpha chain. During this reaction, the Ser that is part of the protease active site of the proenzyme becomes the pyruvoyl prosthetic group, which constitutes an essential element of the active site of the mature decarboxylase.

The protein localises to the cell membrane. The enzyme catalyses a 1,2-diacyl-sn-glycero-3-phospho-L-serine + H(+) = a 1,2-diacyl-sn-glycero-3-phosphoethanolamine + CO2. It functions in the pathway phospholipid metabolism; phosphatidylethanolamine biosynthesis; phosphatidylethanolamine from CDP-diacylglycerol: step 2/2. Its function is as follows. Catalyzes the formation of phosphatidylethanolamine (PtdEtn) from phosphatidylserine (PtdSer). This chain is Phosphatidylserine decarboxylase proenzyme, found in Vibrio vulnificus (strain CMCP6).